The sequence spans 218 residues: Glutathione S-transferase Y1 (218 aa).

The GST N-terminal domain maps to 2 to 88 (PMILGYWNVR…YIARKHNLCG (87 aa)). Glutathione-binding positions include 7-8 (YW), 46-50 (WLNEK), 59-60 (NL), and 72-73 (QS). Positions 90–208 (TEEERIRVDI…KTSRFLRRPI (119 aa)) constitute a GST C-terminal domain. Residue tyrosine 116 coordinates substrate.

It belongs to the GST superfamily. Mu family. In terms of assembly, homodimer.

The protein resides in the cytoplasm. It catalyses the reaction RX + glutathione = an S-substituted glutathione + a halide anion + H(+). In terms of biological role, conjugation of reduced glutathione to a wide number of exogenous and endogenous hydrophobic electrophiles. The sequence is that of Glutathione S-transferase Y1 from Cricetulus longicaudatus (Long-tailed dwarf hamster).